A 234-amino-acid chain; its full sequence is Glycerol uptake facilitator protein (234 aa).

A run of 6 helical transmembrane segments spans residues 9-29 (FLGT…VVLP), 37-57 (GWIV…FVSG), 61-81 (PAYL…LPWA), 83-103 (VLPY…LVWL), 135-155 (LISE…LGLY), and 159-179 (AGIG…SLGG). Residues 65-67 (NPA) carry the NPA 1 motif. An NPA 2 motif is present at residues 186–188 (NPA). A helical membrane pass occupies residues 214-234 (WIPVVGPVIGAALAVLVFSLF).

Belongs to the MIP/aquaporin (TC 1.A.8) family.

Its subcellular location is the cell membrane. It carries out the reaction glycerol(in) = glycerol(out). Mediates glycerol diffusion across the cytoplasmic membrane via a pore-type mechanism. The polypeptide is Glycerol uptake facilitator protein (glpF) (Streptococcus pneumoniae serotype 4 (strain ATCC BAA-334 / TIGR4)).